The following is a 319-amino-acid chain: 3-oxoacyl-[acyl-carrier-protein] reductase, chloroplastic (319 aa).

A chloroplast-targeting transit peptide spans 1-57; it reads MAAAVAAPRLISLKAVAKLGFREISQIRQLAPLHSAIPHFGMLRCRSRQPFSTSVVK. At A58 the chain carries N-acetylalanine. 81 to 105 contributes to the NADP(+) binding site; it reads ITGASRGIGKAIALALGKAGCKVLV. Position 213 (S213) interacts with substrate. The active-site Proton acceptor is Y226.

The protein belongs to the short-chain dehydrogenases/reductases (SDR) family. In terms of assembly, homotetramer.

It is found in the plastid. The protein resides in the chloroplast. The catalysed reaction is a (3R)-hydroxyacyl-[ACP] + NADP(+) = a 3-oxoacyl-[ACP] + NADPH + H(+). Its pathway is lipid metabolism; fatty acid biosynthesis. The protein is 3-oxoacyl-[acyl-carrier-protein] reductase, chloroplastic of Arabidopsis thaliana (Mouse-ear cress).